A 110-amino-acid polypeptide reads, in one-letter code: Large ribosomal subunit protein uL22 (110 aa).

This sequence belongs to the universal ribosomal protein uL22 family. Part of the 50S ribosomal subunit.

In terms of biological role, this protein binds specifically to 23S rRNA; its binding is stimulated by other ribosomal proteins, e.g. L4, L17, and L20. It is important during the early stages of 50S assembly. It makes multiple contacts with different domains of the 23S rRNA in the assembled 50S subunit and ribosome. Functionally, the globular domain of the protein is located near the polypeptide exit tunnel on the outside of the subunit, while an extended beta-hairpin is found that lines the wall of the exit tunnel in the center of the 70S ribosome. In Pectobacterium atrosepticum (strain SCRI 1043 / ATCC BAA-672) (Erwinia carotovora subsp. atroseptica), this protein is Large ribosomal subunit protein uL22.